The following is a 297-amino-acid chain: MSAKETIEKLKKARIITALVTPFKENGQINFEAFPKLVEDLLASHTEGLILAGTTAESPTLTHDEELEIFASINQLVDGRVPLIAGIGTNDTRDSVEFIKEVAKLGYIDAGLAVTPYYNKPSQEGIYQHFKAIASASDLPIILYNIPGRVVTEILPDTILRLAQLENVIAVKECTSTDNLAYLIENVPEGFLVYTGEDGLAFHAKTLGGQGVISVASHILGQEFFEMFAEIDHGSIQEAAAIQRKILPKINALFSVTSPAPIKTVLNNKGYAVGGLRLPLVACTDQEAKIIIEQIEN.

Thr55 serves as a coordination point for pyruvate. Tyr144 (proton donor/acceptor) is an active-site residue. The active-site Schiff-base intermediate with substrate is the Lys172. Ile213 is a binding site for pyruvate.

This sequence belongs to the DapA family. Homotetramer; dimer of dimers.

Its subcellular location is the cytoplasm. It carries out the reaction L-aspartate 4-semialdehyde + pyruvate = (2S,4S)-4-hydroxy-2,3,4,5-tetrahydrodipicolinate + H2O + H(+). It functions in the pathway amino-acid biosynthesis; L-lysine biosynthesis via DAP pathway; (S)-tetrahydrodipicolinate from L-aspartate: step 3/4. Catalyzes the condensation of (S)-aspartate-beta-semialdehyde [(S)-ASA] and pyruvate to 4-hydroxy-tetrahydrodipicolinate (HTPA). This chain is 4-hydroxy-tetrahydrodipicolinate synthase, found in Lactococcus lactis subsp. cremoris (strain SK11).